Here is a 97-residue protein sequence, read N- to C-terminus: Aspartyl/glutamyl-tRNA(Asn/Gln) amidotransferase subunit C (97 aa).

This sequence belongs to the GatC family. Heterotrimer of A, B and C subunits.

The enzyme catalyses L-glutamyl-tRNA(Gln) + L-glutamine + ATP + H2O = L-glutaminyl-tRNA(Gln) + L-glutamate + ADP + phosphate + H(+). It catalyses the reaction L-aspartyl-tRNA(Asn) + L-glutamine + ATP + H2O = L-asparaginyl-tRNA(Asn) + L-glutamate + ADP + phosphate + 2 H(+). Its function is as follows. Allows the formation of correctly charged Asn-tRNA(Asn) or Gln-tRNA(Gln) through the transamidation of misacylated Asp-tRNA(Asn) or Glu-tRNA(Gln) in organisms which lack either or both of asparaginyl-tRNA or glutaminyl-tRNA synthetases. The reaction takes place in the presence of glutamine and ATP through an activated phospho-Asp-tRNA(Asn) or phospho-Glu-tRNA(Gln). The sequence is that of Aspartyl/glutamyl-tRNA(Asn/Gln) amidotransferase subunit C from Listeria innocua serovar 6a (strain ATCC BAA-680 / CLIP 11262).